Here is a 395-residue protein sequence, read N- to C-terminus: Chaperone protein DnaJ (395 aa).

The J domain occupies 4-69; it reads DYYEVLGLSR…DKRRRYDQFG (66 aa). The segment at 151 to 232 adopts a CR-type zinc-finger fold; sequence GVEKTLKIKK…CYGEGIKQGE (82 aa). 8 residues coordinate Zn(2+): Cys-164, Cys-167, Cys-180, Cys-183, Cys-206, Cys-209, Cys-220, and Cys-223. CXXCXGXG motif repeat units follow at residues 164-171, 180-187, 206-213, and 220-227; these read CTECNGTG, CPTCHGSG, CPTCGGEG, and CVSCYGEG.

It belongs to the DnaJ family. Homodimer. Zn(2+) serves as cofactor.

It is found in the cytoplasm. Participates actively in the response to hyperosmotic and heat shock by preventing the aggregation of stress-denatured proteins and by disaggregating proteins, also in an autonomous, DnaK-independent fashion. Unfolded proteins bind initially to DnaJ; upon interaction with the DnaJ-bound protein, DnaK hydrolyzes its bound ATP, resulting in the formation of a stable complex. GrpE releases ADP from DnaK; ATP binding to DnaK triggers the release of the substrate protein, thus completing the reaction cycle. Several rounds of ATP-dependent interactions between DnaJ, DnaK and GrpE are required for fully efficient folding. Also involved, together with DnaK and GrpE, in the DNA replication of plasmids through activation of initiation proteins. The protein is Chaperone protein DnaJ of Chlorobium phaeobacteroides (strain DSM 266 / SMG 266 / 2430).